Consider the following 221-residue polypeptide: Ribonuclease T (221 aa).

Positions 20–196 (VVVDLETGGF…YDTERTAELF (177 aa)) constitute an Exonuclease domain. Positions 23, 25, 183, and 188 each coordinate Mg(2+). Histidine 183 functions as the Proton donor/acceptor in the catalytic mechanism.

This sequence belongs to the RNase T family. In terms of assembly, homodimer. The cofactor is Mg(2+).

Its function is as follows. Trims short 3' overhangs of a variety of RNA species, leaving a one or two nucleotide 3' overhang. Responsible for the end-turnover of tRNA: specifically removes the terminal AMP residue from uncharged tRNA (tRNA-C-C-A). Also appears to be involved in tRNA biosynthesis. In Chromohalobacter salexigens (strain ATCC BAA-138 / DSM 3043 / CIP 106854 / NCIMB 13768 / 1H11), this protein is Ribonuclease T.